A 305-amino-acid chain; its full sequence is Olfactory receptor 9G19 (305 aa).

At 1–24 (MDQNNNTVSEFIMLGFTTDPVIQK) the chain is on the extracellular side. The helical transmembrane segment at 25-45 (VLFAVFLVVYTLTLMGNSSLI) threads the bilayer. Residues 46–55 (MLICNDSRLH) are Cytoplasmic-facing. The helical transmembrane segment at 56-76 (TPMYFFIGNLSFLDLGLSSVY) threads the bilayer. The Extracellular portion of the chain corresponds to 77–96 (TPKILETCISEDKSISFAGC). Cysteine 96 and cysteine 178 form a disulfide bridge. The helical transmembrane segment at 97–117 (VAQFFFSAALDYTECYLLAAM) threads the bilayer. Over 118–138 (AYDRYVAISKPLLYSQAMSLK) the chain is Cytoplasmic. A helical membrane pass occupies residues 139 to 159 (LCVCFVVASYVGGFINSVIIT). The Extracellular segment spans residues 160–204 (KDTFALTFCNDNVIDDFFCDIPPLVKLACGKKKSFQSVLFFLLTS). The helical transmembrane segment at 205–225 (NVIIPIVFILATYLFIIATIL) threads the bilayer. The Cytoplasmic portion of the chain corresponds to 226–236 (RIRSTQGRLKA). The helical transmembrane segment at 237-257 (FSTCSSHLISVTLYYGSILYI) threads the bilayer. Residues 258 to 270 (YARPRSSYSLDRD) lie on the Extracellular side of the membrane. Residues 271 to 291 (KIVSTFYTVVFPMLNPLIYSL) traverse the membrane as a helical segment. Residues 292–305 (RNKDVKEALNKLLK) are Cytoplasmic-facing.

It belongs to the G-protein coupled receptor 1 family.

The protein localises to the cell membrane. Odorant receptor. The chain is Olfactory receptor 9G19 from Mus musculus (Mouse).